Reading from the N-terminus, the 84-residue chain is UPF0512 protein O (84 aa).

The protein belongs to the UPF0512 family.

In Dictyostelium discoideum (Social amoeba), this protein is UPF0512 protein O.